Reading from the N-terminus, the 254-residue chain is MNQFLFVSFCALLGLSQVSAATLSSGRIVGGFQIDIAEVPHQVSLQRSGRHFCGGSIISPRWVLTAAHCTTNTDPAAYTIRAGSTDRTNGGIIVKVKSVIPHPQYNGDTYNYDFSLLELDESIGFSRSIEAIALPEASETVADGAMCTVSGWGDTKNVFEMNTLLRAVNVPSYNQAECAAALVNVVPVTEQMICAGYAAGGKDSCQGDSGGPLVSGDKLVGVVSWGKGCALPNLPGVYARVSTVRQWIREVSEV.

The first 20 residues, 1–20, serve as a signal peptide directing secretion; that stretch reads MNQFLFVSFCALLGLSQVSA. A propeptide spans 21 to 27 (activation peptide); that stretch reads ATLSSGR. The 226-residue stretch at 28–253 folds into the Peptidase S1 domain; the sequence is IVGGFQIDIA…VRQWIREVSE (226 aa). An intrachain disulfide couples cysteine 53 to cysteine 69. Residues histidine 68 and aspartate 113 each act as charge relay system in the active site. Disulfide bonds link cysteine 178-cysteine 194 and cysteine 205-cysteine 229. The active-site Charge relay system is serine 209.

This sequence belongs to the peptidase S1 family. In terms of tissue distribution, midgut.

The protein resides in the secreted. The protein localises to the extracellular space. The catalysed reaction is Preferential cleavage: Arg-|-Xaa, Lys-|-Xaa.. Its function is as follows. Major function may be to aid in digestion of the blood meal. This chain is Trypsin 3A1, found in Aedes aegypti (Yellowfever mosquito).